An 860-amino-acid polypeptide reads, in one-letter code: MGTTASAAPQATLHERLHSDSMTDSRRSIQTLGIHNNKAKSIITNKVAPVVITYNCRQEFQIHDDVLRTNYKVGRISDNMPEHHLVQGSFFMVQDVFSKADVLNTTASYGAPNFRQSGGGFPLYGMGQTSLGGFKRVLESLQTRGHQEVIFFCLREEPVVFLHLQEDFLPYTPRRKENLHENLQHLQRGASSEDLELTIRKELHDFAKLNDNMFYVYNDIEHLKGEPQKICICSEEDIHITEEVYRRPRFTMPAYRYYRLPLPMEGAPMEEQFDAFVKVLRENPSLSLNRDASRLLPALLFSCQVGVGRTNLGLILGTLVMMHLTRTTAEKTTPAEEEVKDEHKIQFRVIESLIGKLPKGQEVMEEVNRAIDLCSEMHDIRESIYENKQKLEGIGEDYQTQGSSTKDYFLHGALQSLERYFYLIVFNAYLHEQYPLAFACSFSQWLCSNAWIYRLLSCMNQSELRAPADLVTKGARVLVADEYLAPDVLSTIKEMKVANFRRVPKMSIYGMAQPTSEAASVVLAYLCDEKRKHSSVLWVNLQDELLLEANNQIFSPREPTRVEQCIRVCSAQPEDIQSLEASLKAQLLASQQWLEVTLEQEKQMKMIKSCSTVQEIFNQLKSSHHALQYRRIPFPECSAPSEEGFDQLLDVMKATLAEDSLSAFVFNCSNGKARTTTAMVIATLTLWHFNGFPEFCEDEIVSVPDAKYTKGEFEVVMKLVRLLPDGQRMKREVDAALDSVSETMTPLHYHLREIIICTYRQIRSCKSDAELLALQALLYLERYIYLILYNSYLHLEKRDSWRRPFSVWMQQVAAPAGVYELLNQLGFSEFEDLRDSTLCRLRRRWLQQNRHGLPFRGELI.

Positions 1–24 (MGTTASAAPQATLHERLHSDSMTD) are disordered. The N-myristoyl glycine moiety is linked to residue glycine 2. Over residues 13–24 (LHERLHSDSMTD) the composition is skewed to basic and acidic residues.

It belongs to the paladin family.

It localises to the cytoplasm. The protein localises to the cytosol. The sequence is that of Paladin (pald1) from Danio rerio (Zebrafish).